Reading from the N-terminus, the 68-residue chain is Putative membrane protein insertion efficiency factor (68 aa).

Belongs to the UPF0161 family.

The protein resides in the cell inner membrane. Could be involved in insertion of integral membrane proteins into the membrane. The polypeptide is Putative membrane protein insertion efficiency factor (Persephonella marina (strain DSM 14350 / EX-H1)).